Consider the following 4114-residue polypeptide: Ferrichrome siderophore peptide synthetase (4114 aa).

Carrier domains lie at 797–874 (DPAT…QSSG), 1947–2021 (TDSE…IDKL), 3020–3093 (TQSE…MQSS), and 3574–3650 (QALS…SQTN). Ser835, Ser1982, Ser3054, and Ser3611 each carry O-(pantetheine 4'-phosphoryl)serine. The interval 4040–4061 (LDYSHHSQHSTHDRTPPSTPHV) is disordered. The span at 4041-4054 (DYSHHSQHSTHDRT) shows a compositional bias: basic and acidic residues.

It belongs to the ATP-dependent AMP-binding enzyme family. Requires pantetheine 4'-phosphate as cofactor.

It participates in siderophore biosynthesis; ferrichrome biosynthesis. Multidomain peptide synthetase involved in ferrichrome biosynthesis. In Mycosarcoma maydis (Corn smut fungus), this protein is Ferrichrome siderophore peptide synthetase (SID2).